The primary structure comprises 497 residues: Serine hydroxymethyltransferase, mitochondrial (497 aa).

A mitochondrion-targeting transit peptide spans 1–27; it reads MFIRRLHTSSRRLTCGEALRACQQTGA. The residue at position 272 (Lys-272) is an N6-(pyridoxal phosphate)lysine.

This sequence belongs to the SHMT family. In terms of assembly, homotetramer. It depends on pyridoxal 5'-phosphate as a cofactor.

The protein localises to the mitochondrion. It catalyses the reaction (6R)-5,10-methylene-5,6,7,8-tetrahydrofolate + glycine + H2O = (6S)-5,6,7,8-tetrahydrofolate + L-serine. The protein operates within one-carbon metabolism; tetrahydrofolate interconversion. Functionally, interconversion of serine and glycine. This chain is Serine hydroxymethyltransferase, mitochondrial (SHM1), found in Eremothecium gossypii (strain ATCC 10895 / CBS 109.51 / FGSC 9923 / NRRL Y-1056) (Yeast).